Here is a 333-residue protein sequence, read N- to C-terminus: Gap junction alpha-4 protein (333 aa).

Residues Met-1 to Val-20 are Cytoplasmic-facing. A helical membrane pass occupies residues Val-21–Ala-40. The Extracellular portion of the chain corresponds to Gly-41–Arg-76. A helical transmembrane segment spans residues Tyr-77–Leu-99. At Ser-100–Arg-148 the chain is on the cytoplasmic side. The helical transmembrane segment at Gly-149 to Tyr-171 threads the bilayer. Over Gly-172–Ile-208 the chain is Extracellular. Residues Phe-209 to Leu-231 traverse the membrane as a helical segment. The Cytoplasmic segment spans residues Leu-232–Val-333. The interval Ala-292 to Val-333 is disordered. Over residues Ser-321–Val-333 the composition is skewed to polar residues.

This sequence belongs to the connexin family. Alpha-type (group II) subfamily. A connexon is composed of a hexamer of connexins. Highly expressed in lung.

It localises to the cell membrane. The protein localises to the cell junction. The protein resides in the gap junction. Its function is as follows. One gap junction consists of a cluster of closely packed pairs of transmembrane channels, the connexons, through which materials of low MW diffuse from one cell to a neighboring cell. The protein is Gap junction alpha-4 protein (Gja4) of Mus musculus (Mouse).